The following is a 318-amino-acid chain: Homoserine kinase (318 aa).

97–107 contacts ATP; the sequence is PIGSGLGSSAC.

Belongs to the GHMP kinase family. Homoserine kinase subfamily.

It is found in the cytoplasm. It carries out the reaction L-homoserine + ATP = O-phospho-L-homoserine + ADP + H(+). Its pathway is amino-acid biosynthesis; L-threonine biosynthesis; L-threonine from L-aspartate: step 4/5. In terms of biological role, catalyzes the ATP-dependent phosphorylation of L-homoserine to L-homoserine phosphate. The polypeptide is Homoserine kinase (Aliivibrio fischeri (strain ATCC 700601 / ES114) (Vibrio fischeri)).